Reading from the N-terminus, the 527-residue chain is AAA ATPase forming ring-shaped complexes (527 aa).

A compositionally biased stretch (low complexity) spans 1–18; the sequence is MVTMSSPTDSSPSNSFSD. Positions 1–38 are disordered; the sequence is MVTMSSPTDSSPSNSFSDFNREEQSRLSDEVRQLKRTN. Positions 19–33 are enriched in basic and acidic residues; the sequence is FNREEQSRLSDEVRQ. Residues 21–53 adopt a coiled-coil conformation; it reads REEQSRLSDEVRQLKRTNSDLGARNAKLAEMLK. 257–262 contacts ATP; the sequence is GCGKTL. The tract at residues 492–515 is disordered; sequence DENQQSEDLPNTSNPDEWSRITGR. A compositionally biased stretch (polar residues) spans 497–507; it reads SEDLPNTSNPD.

This sequence belongs to the AAA ATPase family. As to quaternary structure, homohexamer. Assembles into a hexameric ring structure.

The chain is AAA ATPase forming ring-shaped complexes from Corynebacterium glutamicum (strain R).